The primary structure comprises 129 residues: Small ribosomal subunit protein uS8 (129 aa).

Belongs to the universal ribosomal protein uS8 family. As to quaternary structure, part of the 30S ribosomal subunit.

In terms of biological role, one of the primary rRNA binding proteins, it binds directly to 16S rRNA central domain where it helps coordinate assembly of the platform of the 30S subunit. This Picrophilus torridus (strain ATCC 700027 / DSM 9790 / JCM 10055 / NBRC 100828 / KAW 2/3) protein is Small ribosomal subunit protein uS8.